Here is a 128-residue protein sequence, read N- to C-terminus: Probable soluble cytochrome b562 2 (128 aa).

The N-terminal stretch at 1–22 is a signal peptide; it reads MGKTLMALITAALLSTSSLVMA. The heme b site is built by Met-29 and His-124.

It belongs to the cytochrome b562 family. Heme b serves as cofactor.

The protein localises to the periplasm. Its function is as follows. Electron-transport protein of unknown function. The sequence is that of Probable soluble cytochrome b562 2 (cybC2) from Yersinia pestis.